Here is a 210-residue protein sequence, read N- to C-terminus: MKLKKKMLTLLLTASMSFGLFGATSSAATDYWQYWTDGGGMVNAVNGPGGNYSVTWQNTGNFVVGKGWTVGSPNRVINYNAGIWEPSGNGYLTLYGWTRNALIEYYVVDSWGTYRPTGNYKGTVNSDGGTYDIYTTMRYNAPSIDGTQTFQQFWSVRQSKRPTGSNVSITFSNHVNAWRSKGMNLGSSWAYQVLATEGYQSSGRSNVTVW.

The first 19 residues, 1 to 19 (MKLKKKMLTLLLTASMSFG), serve as a signal peptide directing secretion. The GH11 domain maps to 20–210 (LFGATSSAAT…SSGRSNVTVW (191 aa)). The active-site Nucleophile is the E104. Residue E197 is the Proton donor of the active site.

It belongs to the glycosyl hydrolase 11 (cellulase G) family.

The catalysed reaction is Endohydrolysis of (1-&gt;4)-beta-D-xylosidic linkages in xylans.. It participates in glycan degradation; xylan degradation. This chain is Endo-1,4-beta-xylanase A (xynA), found in Geobacillus stearothermophilus (Bacillus stearothermophilus).